An 897-amino-acid chain; its full sequence is Probable bifunctional chitinase/lysozyme (897 aa).

An N-terminal signal peptide occupies residues 1-24 (MKLNIFTKSMIGMGLVCSALPALA). Positions 25-91 (MEAWNNQQGG…SQFGNTLSCE (67 aa)) constitute a Chitin-binding type-3 1 domain. Disordered regions lie at residues 90 to 127 (CEKSGSSSSSNSNTPASNTPANGGSATPAQGTVPSNSS), 182 to 222 (TEIS…PADK), and 287 to 333 (QYGN…DSVN). Over residues 95-111 (SSSSSNSNTPASNTPAN) the composition is skewed to low complexity. 2 stretches are compositionally biased toward polar residues: residues 113-127 (GSATPAQGTVPSNSS) and 182-197 (TEISETSNPQSCTSAP). One can recognise a Chitin-binding type-3 2 domain in the interval 128–194 (VVAWNKQQGG…SETSNPQSCT (67 aa)). A compositionally biased stretch (pro residues) spans 198-216 (QPSPDVKPAPDVKPAPDVQ). The region spanning 229–295 (VVAWKGQEGS…SQYGNPGSCS (67 aa)) is the Chitin-binding type-3 3 domain. Pro residues predominate over residues 309–318 (DPTPETPVTP). The span at 322 to 333 (NSEPSTPADSVN) shows a compositional bias: polar residues. Chitin-binding type-3 domains lie at 337–403 (LQAW…TTCE) and 459–529 (AKAW…PQFN). The 292-residue stretch at 586 to 877 (KHVYAPYVDF…TNLSPEFHGL (292 aa)) folds into the GH18 domain. C628 and C673 are joined by a disulfide. The active-site Proton donor is the E700.

It belongs to the glycosyl hydrolase 18 family. Chitinase class II subfamily.

The protein localises to the periplasm. It catalyses the reaction Random endo-hydrolysis of N-acetyl-beta-D-glucosaminide (1-&gt;4)-beta-linkages in chitin and chitodextrins.. The catalysed reaction is Hydrolysis of (1-&gt;4)-beta-linkages between N-acetylmuramic acid and N-acetyl-D-glucosamine residues in a peptidoglycan and between N-acetyl-D-glucosamine residues in chitodextrins.. Bifunctional enzyme with lysozyme/chitinase activity. In Escherichia coli (strain K12), this protein is Probable bifunctional chitinase/lysozyme (chiA).